The chain runs to 424 residues: Serpin E3 (424 aa).

Residues 1-20 (MPPFLITLFLFHSCCLRANG) form the signal peptide. Asn46 carries an N-linked (GlcNAc...) asparagine glycan. The interval 143 to 174 (DLSEPNSTAIQTSEGASRETAGGGPSEGPGGW) is disordered. The segment covering 146–157 (EPNSTAIQTSEG) has biased composition (polar residues). A compositionally biased stretch (gly residues) spans 163-173 (AGGGPSEGPGG).

It belongs to the serpin family.

It is found in the secreted. Probable serine protease inhibitor. This is Serpin E3 (SERPINE3) from Homo sapiens (Human).